The primary structure comprises 483 residues: Regulatory protein ViaA (483 aa).

The protein belongs to the ViaA family. In terms of assembly, homodimer. Interacts with RavA.

Its subcellular location is the cytoplasm. Functionally, component of the RavA-ViaA chaperone complex, which may act on the membrane to optimize the function of some of the respiratory chains. ViaA stimulates the ATPase activity of RavA. The protein is Regulatory protein ViaA of Escherichia coli O81 (strain ED1a).